The following is a 167-amino-acid chain: MSDLICVGSVAGSFGVRGEVRLKSFCAVPEDIEMYSPLTDESGTARYPIVLTRAIKNGFAAHLGGVETKEEADALKGLRLYTQRDRLPSLPDDEFYHTDLIGLEVFDTGGTLLGKVISVQNHGAADLLEIGGAGLKSPVLLPFTQAAVPTVDLEQRRIVADPPEGLF.

A PRC barrel domain is found at 92–166 (DDEFYHTDLI…RIVADPPEGL (75 aa)).

This sequence belongs to the RimM family. Binds ribosomal protein uS19.

The protein resides in the cytoplasm. Its function is as follows. An accessory protein needed during the final step in the assembly of 30S ribosomal subunit, possibly for assembly of the head region. Essential for efficient processing of 16S rRNA. May be needed both before and after RbfA during the maturation of 16S rRNA. It has affinity for free ribosomal 30S subunits but not for 70S ribosomes. The protein is Ribosome maturation factor RimM of Ruegeria pomeroyi (strain ATCC 700808 / DSM 15171 / DSS-3) (Silicibacter pomeroyi).